A 428-amino-acid polypeptide reads, in one-letter code: GTPase Obg (428 aa).

The Obg domain occupies 1–158 (MFVDQTKIDV…RTLRLELKVL (158 aa)). In terms of domain architecture, OBG-type G spans 159 to 328 (ADVGLVGFPS…LMGKTADLVE (170 aa)). GTP contacts are provided by residues 165 to 172 (GFPSVGKS), 190 to 194 (FTTLT), 212 to 215 (DLPG), 282 to 285 (TQMD), and 309 to 311 (SSV). The Mg(2+) site is built by Ser-172 and Thr-192. The OCT domain occupies 350-428 (YKKPEDDGFK…IADFTFEFVD (79 aa)).

Belongs to the TRAFAC class OBG-HflX-like GTPase superfamily. OBG GTPase family. Monomer. Mg(2+) is required as a cofactor.

It is found in the cytoplasm. In terms of biological role, an essential GTPase which binds GTP, GDP and possibly (p)ppGpp with moderate affinity, with high nucleotide exchange rates and a fairly low GTP hydrolysis rate. Plays a role in control of the cell cycle, stress response, ribosome biogenesis and in those bacteria that undergo differentiation, in morphogenesis control. This chain is GTPase Obg, found in Lactobacillus gasseri (strain ATCC 33323 / DSM 20243 / BCRC 14619 / CIP 102991 / JCM 1131 / KCTC 3163 / NCIMB 11718 / NCTC 13722 / AM63).